The following is a 72-amino-acid chain: Translation initiation factor IF-1 (72 aa).

In terms of domain architecture, S1-like spans 1 to 72 (MSNDDSIEFE…TKGRITYRMK (72 aa)).

The protein belongs to the IF-1 family. Component of the 30S ribosomal translation pre-initiation complex which assembles on the 30S ribosome in the order IF-2 and IF-3, IF-1 and N-formylmethionyl-tRNA(fMet); mRNA recruitment can occur at any time during PIC assembly.

Its subcellular location is the cytoplasm. One of the essential components for the initiation of protein synthesis. Stabilizes the binding of IF-2 and IF-3 on the 30S subunit to which N-formylmethionyl-tRNA(fMet) subsequently binds. Helps modulate mRNA selection, yielding the 30S pre-initiation complex (PIC). Upon addition of the 50S ribosomal subunit IF-1, IF-2 and IF-3 are released leaving the mature 70S translation initiation complex. This is Translation initiation factor IF-1 from Xanthomonas campestris pv. campestris (strain B100).